The following is a 368-amino-acid chain: tRNA(Met) cytidine acetate ligase (368 aa).

ATP-binding positions include 7–20, Gly-96, Asn-152, and Arg-175; that span reads IAEF…HKYL.

It belongs to the TmcAL family.

It is found in the cytoplasm. The catalysed reaction is cytidine(34) in elongator tRNA(Met) + acetate + ATP = N(4)-acetylcytidine(34) in elongator tRNA(Met) + AMP + diphosphate. Catalyzes the formation of N(4)-acetylcytidine (ac(4)C) at the wobble position of elongator tRNA(Met), using acetate and ATP as substrates. First activates an acetate ion to form acetyladenylate (Ac-AMP) and then transfers the acetyl group to tRNA to form ac(4)C34. In Streptococcus pyogenes serotype M1, this protein is tRNA(Met) cytidine acetate ligase.